A 90-amino-acid chain; its full sequence is Inactive casein kinase II subunit alpha-2 (90 aa).

Residues 40–48 (VGRGKYSEV) and Lys-63 contribute to the ATP site.

This sequence belongs to the protein kinase superfamily. Ser/Thr protein kinase family. CK2 subfamily.

Its function is as follows. The Nipponbare allele of HD6 contains a premature stop codon, resulting in a truncated non-functional product. The sequence is that of Inactive casein kinase II subunit alpha-2 from Oryza sativa subsp. japonica (Rice).